The chain runs to 67 residues: Small, acid-soluble spore protein B (67 aa).

Belongs to the alpha/beta-type SASP family.

In terms of biological role, SASP are bound to spore DNA. They are double-stranded DNA-binding proteins that cause DNA to change to an a-like conformation. They protect the DNA backbone from chemical and enzymatic cleavage and are thus involved in dormant spore's high resistance to UV light. This is Small, acid-soluble spore protein B (sspB) from Bacillus subtilis (strain 168).